Reading from the N-terminus, the 85-residue chain is U4-theraphotoxin-Hhn1q (85 aa).

The first 22 residues, 1–22 (MKVTLIAILTCAAVLVLHTTAA), serve as a signal peptide directing secretion. Positions 23 to 48 (EELEAESQLMEVGMPDTELAAVDEER) are excised as a propeptide. 3 cysteine pairs are disulfide-bonded: C52–C66, C56–C77, and C71–C82.

Belongs to the neurotoxin 12 (Hwtx-2) family. 02 (Hwtx-2) subfamily. In terms of tissue distribution, expressed by the venom gland.

The protein localises to the secreted. In terms of biological role, postsynaptic neurotoxin. The protein is U4-theraphotoxin-Hhn1q of Cyriopagopus hainanus (Chinese bird spider).